The primary structure comprises 657 residues: Methionine--tRNA ligase (657 aa).

Residues 13–23 carry the 'HIGH' region motif; the sequence is YYPSGNLHIGH. Residues 308–312 carry the 'KMSKS' region motif; that stretch reads KMSKS. Lys-311 serves as a coordination point for ATP. The tRNA-binding domain occupies 557 to 657; it reads DFDKVEIKAA…SAIPNGAVIK (101 aa).

It belongs to the class-I aminoacyl-tRNA synthetase family. MetG type 2B subfamily. Homodimer.

It is found in the cytoplasm. The enzyme catalyses tRNA(Met) + L-methionine + ATP = L-methionyl-tRNA(Met) + AMP + diphosphate. In terms of biological role, is required not only for elongation of protein synthesis but also for the initiation of all mRNA translation through initiator tRNA(fMet) aminoacylation. The protein is Methionine--tRNA ligase of Staphylococcus aureus (strain COL).